A 346-amino-acid polypeptide reads, in one-letter code: Tryptophan--tRNA ligase (346 aa).

ATP is bound by residues 10 to 12 (QAS) and 18 to 19 (GN). The 'HIGH' region motif lies at 11 to 19 (ASGKQHLGN). Residue Asp140 participates in L-tryptophan binding. ATP-binding positions include 152-154 (GND), Ile191, and 200-204 (KMSKS). The 'KMSKS' region motif lies at 200–204 (KMSKS).

Belongs to the class-I aminoacyl-tRNA synthetase family. Homodimer.

It localises to the cytoplasm. The enzyme catalyses tRNA(Trp) + L-tryptophan + ATP = L-tryptophyl-tRNA(Trp) + AMP + diphosphate + H(+). Functionally, catalyzes the attachment of tryptophan to tRNA(Trp). The sequence is that of Tryptophan--tRNA ligase from Mycoplasma pneumoniae (strain ATCC 29342 / M129 / Subtype 1) (Mycoplasmoides pneumoniae).